Reading from the N-terminus, the 131-residue chain is Arsenate reductase 2 (131 aa).

Catalysis depends on nucleophile residues cysteine 10, cysteine 82, and cysteine 89. 2 disulfides stabilise this stretch: cysteine 10–cysteine 82 and cysteine 82–cysteine 89.

Belongs to the low molecular weight phosphotyrosine protein phosphatase family. Thioredoxin-coupled ArsC subfamily.

It localises to the cytoplasm. It carries out the reaction arsenate + [thioredoxin]-dithiol + H(+) = arsenite + [thioredoxin]-disulfide + H2O. Catalyzes the reduction of arsenate [As(V)] to arsenite [As(III)]. The polypeptide is Arsenate reductase 2 (Staphylococcus haemolyticus (strain JCSC1435)).